Consider the following 293-residue polypeptide: Small ribosomal subunit biogenesis GTPase RsgA 2 (293 aa).

The 161-residue stretch at 63 to 223 folds into the CP-type G domain; it reads SNELVRPPIA…VADTPGFSVL (161 aa). GTP contacts are provided by residues 112 to 115 and 166 to 174; these read TKVD and GQSGVGKSS. Zn(2+)-binding residues include Cys-247, Cys-252, His-254, and Cys-260.

The protein belongs to the TRAFAC class YlqF/YawG GTPase family. RsgA subfamily. Monomer. Associates with 30S ribosomal subunit, binds 16S rRNA. Zn(2+) is required as a cofactor.

The protein localises to the cytoplasm. One of several proteins that assist in the late maturation steps of the functional core of the 30S ribosomal subunit. Helps release RbfA from mature subunits. May play a role in the assembly of ribosomal proteins into the subunit. Circularly permuted GTPase that catalyzes slow GTP hydrolysis, GTPase activity is stimulated by the 30S ribosomal subunit. In Oceanobacillus iheyensis (strain DSM 14371 / CIP 107618 / JCM 11309 / KCTC 3954 / HTE831), this protein is Small ribosomal subunit biogenesis GTPase RsgA 2.